A 193-amino-acid polypeptide reads, in one-letter code: Major intrinsically disordered NOTCH2-binding receptor 1-like homolog (193 aa).

The residue at position 82 (S82) is a Phosphoserine. An N-linked (GlcNAc...) asparagine glycan is attached at N128. A helical transmembrane segment spans residues 172–192; that stretch reads GLILLLVASILVTIVTLSTIF.

Belongs to the MINAR family. As to quaternary structure, interacts with NOTCH2. As to expression, widely expressed in the cortex and Purkinje cells of cerebellum. Expressed in the inner ear, mainly in the hair cells, spiral ganglia, the spiral limbus, and the stria vascularis.

Its subcellular location is the lysosome membrane. It localises to the endoplasmic reticulum membrane. Its function is as follows. Binds cholesterol and may regulate the distribution and homeostasis of cholesterol in hair cells. May play a role in angiogenesis. This is Major intrinsically disordered NOTCH2-binding receptor 1-like homolog from Mus musculus (Mouse).